Reading from the N-terminus, the 1312-residue chain is Angiotensin-converting enzyme (1312 aa).

A signal peptide spans 1-34; the sequence is MGAASGQRGRWPLSPPLLMLSLLVLLLQPSPAPA. Residues 35–1264 lie on the Extracellular side of the membrane; the sequence is LDPGLQPGNF…LEPQQARVGQ (1230 aa). Peptidase M2 domains follow at residues 45–629 and 648–1227; these read SPDE…LGWP and ETDE…LGWP. Asn59, Asn79, Asn116, Asn151, and Asn165 each carry an N-linked (GlcNAc...) asparagine glycan. A disulfide bridge links Cys162 with Cys170. Chloride is bound at residue Tyr236. Asn323 carries an N-linked (GlcNAc...) asparagine glycan. Cysteines 364 and 382 form a disulfide. His395 contributes to the Zn(2+) binding site. The Proton acceptor 1 role is filled by Glu396. His399 and Glu423 together coordinate Zn(2+). N-linked (GlcNAc...) asparagine glycosylation occurs at Asn514. His525 serves as the catalytic Proton donor 1. Arg534 contacts chloride. The cysteines at positions 550 and 562 are disulfide-linked. N-linked (GlcNAc...) asparagine glycosylation is present at Asn682. N-linked (GlcNAc...) (complex) asparagine glycosylation is found at Asn700 and Asn719. A disulfide bond links Cys762 and Cys768. Asn765 carries an N-linked (GlcNAc...) asparagine glycan. Residues Arg796 and Tyr834 each coordinate chloride. An N-linked (GlcNAc...) asparagine glycan is attached at Asn947. Residues Cys962 and Cys980 are joined by a disulfide bond. Residue His993 coordinates Zn(2+). The active-site Proton acceptor 2 is the Glu994. Positions 997 and 1021 each coordinate Zn(2+). Chloride-binding residues include Trp1095 and Arg1099. The active-site Proton donor 2 is His1123. Arg1132 contributes to the chloride binding site. A disulfide bond links Cys1148 and Cys1160. An N-linked (GlcNAc...) asparagine glycan is attached at Asn1196. The interval 1220–1261 is juxtamembrane stalk; the sequence is HGETLGWPEYNWAPNTARAEGSTAESNRVNFLGLYLEPQQAR. Residues 1265 to 1281 traverse the membrane as a helical segment; sequence WVLLFLGVALLVATVGL. At 1282 to 1312 the chain is on the cytoplasmic side; it reads AHRLYNIRNHHSLRRPHRGPQFGSEVELRHS. The residue at position 1305 (Ser1305) is a Phosphoserine.

This sequence belongs to the peptidase M2 family. Monomer and homodimer; homodimerizes following binding to an inhibitor. Interacts with calmodulin (CALM1, CALM2 or CALM3); interaction takes place in the cytoplasmic region and regulates phosphorylation and proteolytic cleavage. Zn(2+) serves as cofactor. The cofactor is chloride. In terms of processing, produced following proteolytic cleavage by secretase enzymes that cleave the transmembrane form in the juxtamembrane stalk region upstream of the transmembrane region. Cleavage can take place at different sites of the juxtamembrane stalk region. Post-translationally, phosphorylated by CK2 on Ser-1305; which allows membrane retention. Phosphorylated on tyrosine residues on its extracellular part, promoting cleavage by secretase enzymes and formation of the soluble form (Angiotensin-converting enzyme, soluble form). Highly expressed in kidney and lung; not expressed in the liver. In the brain, expressed in the cerebral cortex, hippocampus, cerebellum and basal ganglia/brainstem. Highly expressed in dopamine receptor DRD1-expressing neurons in the dorsal striatum and the nucleus accumbens of the brain. As to expression, specifically expressed in spermatocytes, adult testis.

It is found in the cell membrane. It localises to the cytoplasm. Its subcellular location is the secreted. It catalyses the reaction Release of a C-terminal dipeptide, oligopeptide-|-Xaa-Yaa, when Xaa is not Pro, and Yaa is neither Asp nor Glu. Thus, conversion of angiotensin I to angiotensin II, with increase in vasoconstrictor activity, but no action on angiotensin II.. The catalysed reaction is angiotensin I + H2O = L-histidyl-L-leucine + angiotensin II. The enzyme catalyses bradykinin + H2O = L-Phe-L-Arg + bradykinin(1-7). It carries out the reaction substance P + H2O = substance P(1-9) + L-Leu-L-Met-NH2. It catalyses the reaction substance P + H2O = substance P(1-8) + Gly-L-Leu-L-Met-NH2. The catalysed reaction is substance P + H2O = L-Phe-L-Phe-Gly-L-Leu-L-Met-NH2 + substance P(1-6). The enzyme catalyses neurotensin + H2O = neurotensin(1-11) + L-isoleucyl-L-leucine. It carries out the reaction goralatide + H2O = N-acetyl-L-seryl-L-aspartate + L-lysyl-L-proline. It catalyses the reaction Met-enkephalin + H2O = L-phenylalanyl-L-methionine + L-tyrosylglycylglycine. The catalysed reaction is Leu-enkephalin + H2O = L-tyrosylglycylglycine + L-phenylalanyl-L-leucine. The enzyme catalyses Met-enkephalin-Arg-Phe + H2O = L-arginyl-L-phenylalanine + Met-enkephalin. Its activity is regulated as follows. The dipeptidyl carboxypeptidase activity is specifically inhibited by lisinopril, captopril and enalaprilat. The N-terminal catalytic domain, but not the C-terminal catalytic domain, is specifically inhibited by the phosphinic peptide RXP 407. The putative GPIase activity is nearly insensitive to captopril. Functionally, dipeptidyl carboxypeptidase that removes dipeptides from the C-terminus of a variety of circulating hormones, such as angiotensin I, bradykinin or enkephalins, thereby playing a key role in the regulation of blood pressure, electrolyte homeostasis or synaptic plasticity. Composed of two similar catalytic domains, each possessing a functional active site, with different selectivity for substrates. Plays a major role in the angiotensin-renin system that regulates blood pressure and sodium retention by the kidney by converting angiotensin I to angiotensin II, resulting in an increase of the vasoconstrictor activity of angiotensin. Also able to inactivate bradykinin, a potent vasodilator, and therefore enhance the blood pressure response. Acts as a regulator of synaptic transmission by mediating cleavage of neuropeptide hormones, such as substance P, neurotensin or enkephalins. Catalyzes degradation of different enkephalin neuropeptides (Met-enkephalin, Leu-enkephalin, Met-enkephalin-Arg-Phe and possibly Met-enkephalin-Arg-Gly-Leu). Acts as a regulator of synaptic plasticity in the nucleus accumbens of the brain by mediating cleavage of Met-enkephalin-Arg-Phe, a strong ligand of Mu-type opioid receptor OPRM1, into Met-enkephalin. Met-enkephalin-Arg-Phe cleavage by ACE decreases activation of OPRM1, leading to long-term synaptic potentiation of glutamate release. Also acts as a regulator of hematopoietic stem cell differentiation by mediating degradation of hemoregulatory peptide N-acetyl-SDKP (AcSDKP). Acts as a regulator of cannabinoid signaling pathway by mediating degradation of hemopressin, an antagonist peptide of the cannabinoid receptor CNR1. Involved in amyloid-beta metabolism by catalyzing degradation of Amyloid-beta protein 40 and Amyloid-beta protein 42 peptides, thereby preventing plaque formation. Catalyzes cleavage of cholecystokinin (maturation of Cholecystokinin-8 and Cholecystokinin-5) and Gonadoliberin-1 (both maturation and degradation) hormones. Degradation of hemoregulatory peptide N-acetyl-SDKP (AcSDKP) and amyloid-beta proteins is mediated by the N-terminal catalytic domain, while angiotensin I and cholecystokinin cleavage is mediated by the C-terminal catalytic region. Its function is as follows. Soluble form that is released in blood plasma and other body fluids following proteolytic cleavage in the juxtamembrane stalk region. Isoform produced by alternative promoter usage that is specifically expressed in spermatocytes and adult testis, and which is required for male fertility. In contrast to somatic isoforms, only contains one catalytic domain. Acts as a dipeptidyl carboxypeptidase that removes dipeptides from the C-terminus of substrates. The identity of substrates that are needed for male fertility is unknown. Isoform Testis-specific and isoform Somatic have distinct activities and cannot completely compensate for the loss of the other when expressed in somatic tissues or testis. May also have a glycosidase activity which releases GPI-anchored proteins from the membrane by cleaving the mannose linkage in the GPI moiety. The GPIase activity was reported to be essential for the egg-binding ability of the sperm. This activity is however unclear and has been challenged by other groups, suggesting that it may be indirect. The sequence is that of Angiotensin-converting enzyme from Mus musculus (Mouse).